The chain runs to 488 residues: Aspartyl/glutamyl-tRNA(Asn/Gln) amidotransferase subunit B (488 aa).

It belongs to the GatB/GatE family. GatB subfamily. In terms of assembly, heterotrimer of A, B and C subunits.

It catalyses the reaction L-glutamyl-tRNA(Gln) + L-glutamine + ATP + H2O = L-glutaminyl-tRNA(Gln) + L-glutamate + ADP + phosphate + H(+). It carries out the reaction L-aspartyl-tRNA(Asn) + L-glutamine + ATP + H2O = L-asparaginyl-tRNA(Asn) + L-glutamate + ADP + phosphate + 2 H(+). In terms of biological role, allows the formation of correctly charged Asn-tRNA(Asn) or Gln-tRNA(Gln) through the transamidation of misacylated Asp-tRNA(Asn) or Glu-tRNA(Gln) in organisms which lack either or both of asparaginyl-tRNA or glutaminyl-tRNA synthetases. The reaction takes place in the presence of glutamine and ATP through an activated phospho-Asp-tRNA(Asn) or phospho-Glu-tRNA(Gln). The polypeptide is Aspartyl/glutamyl-tRNA(Asn/Gln) amidotransferase subunit B (Neorickettsia sennetsu (strain ATCC VR-367 / Miyayama) (Ehrlichia sennetsu)).